Consider the following 268-residue polypeptide: Holocytochrome c-type synthase (268 aa).

Residues 1–22 (MGLSPSAPAVAVQASNASASPP) are compositionally biased toward low complexity. A disordered region spans residues 1–25 (MGLSPSAPAVAVQASNASASPPSGC). G2 carries the N-myristoyl glycine lipid modification. HRM repeat units lie at residues 24–29 (GCPMHE) and 34–39 (GCPVNT).

It belongs to the cytochrome c-type heme lyase family.

It is found in the mitochondrion inner membrane. The protein localises to the membrane. It catalyses the reaction holo-[cytochrome c] = apo-[cytochrome c] + heme b. In terms of biological role, lyase that catalyzes the covalent linking of the heme group to the cytochrome C apoprotein to produce the mature functional cytochrome. The protein is Holocytochrome c-type synthase of Homo sapiens (Human).